A 567-amino-acid chain; its full sequence is Urease subunit alpha (567 aa).

The region spanning 129–567 is the Urease domain; sequence GGIDSHIHFI…LPMAQRYFLF (439 aa). 3 residues coordinate Ni(2+): His134, His136, and Lys217. Lys217 carries the post-translational modification N6-carboxylysine. His219 serves as a coordination point for substrate. Ni(2+)-binding residues include His246 and His272. The active-site Proton donor is His320. Residue Asp360 coordinates Ni(2+).

The protein belongs to the metallo-dependent hydrolases superfamily. Urease alpha subunit family. Heterotrimer of UreA (gamma), UreB (beta) and UreC (alpha) subunits. Three heterotrimers associate to form the active enzyme. Ni cation serves as cofactor. In terms of processing, carboxylation allows a single lysine to coordinate two nickel ions.

It is found in the cytoplasm. The catalysed reaction is urea + 2 H2O + H(+) = hydrogencarbonate + 2 NH4(+). It functions in the pathway nitrogen metabolism; urea degradation; CO(2) and NH(3) from urea (urease route): step 1/1. The chain is Urease subunit alpha from Alcanivorax borkumensis (strain ATCC 700651 / DSM 11573 / NCIMB 13689 / SK2).